A 97-amino-acid polypeptide reads, in one-letter code: Co-chaperonin GroES (97 aa).

The protein belongs to the GroES chaperonin family. Heptamer of 7 subunits arranged in a ring. Interacts with the chaperonin GroEL.

The protein localises to the cytoplasm. In terms of biological role, together with the chaperonin GroEL, plays an essential role in assisting protein folding. The GroEL-GroES system forms a nano-cage that allows encapsulation of the non-native substrate proteins and provides a physical environment optimized to promote and accelerate protein folding. GroES binds to the apical surface of the GroEL ring, thereby capping the opening of the GroEL channel. The protein is Co-chaperonin GroES of Pseudomonas entomophila (strain L48).